We begin with the raw amino-acid sequence, 79 residues long: MSTAIWILLIVLALIGGLFGGVFIARKQIEKEIGEHPRLTPEAIREMMSQMGQKPSEAKIQQTYRNIVKQSKAAAAKGK.

A helical membrane pass occupies residues alanine 4–isoleucine 24.

The protein belongs to the UPF0154 family.

It localises to the cell membrane. This is UPF0154 protein SUB0399 from Streptococcus uberis (strain ATCC BAA-854 / 0140J).